A 265-amino-acid polypeptide reads, in one-letter code: Undecaprenyl-diphosphatase 1 (265 aa).

The next 7 membrane-spanning stretches (helical) occupy residues Ile-4–Ser-24, Ala-42–His-62, Phe-84–Ile-104, Leu-108–Ala-128, Ser-184–Leu-204, Met-217–Leu-237, and Leu-245–Leu-265.

Belongs to the UppP family.

It is found in the cell membrane. It carries out the reaction di-trans,octa-cis-undecaprenyl diphosphate + H2O = di-trans,octa-cis-undecaprenyl phosphate + phosphate + H(+). Functionally, catalyzes the dephosphorylation of undecaprenyl diphosphate (UPP). Confers resistance to bacitracin. This Bacillus thuringiensis subsp. konkukian (strain 97-27) protein is Undecaprenyl-diphosphatase 1.